A 213-amino-acid polypeptide reads, in one-letter code: Orotate phosphoribosyltransferase (213 aa).

Position 26 (Lys26) interacts with 5-phospho-alpha-D-ribose 1-diphosphate. 34 to 35 (FF) provides a ligand contact to orotate. 5-phospho-alpha-D-ribose 1-diphosphate contacts are provided by residues 72–73 (YK), Arg99, Lys100, Lys103, His105, and 124–132 (DDVITAGTA). Residues Thr128 and Arg156 each coordinate orotate.

Belongs to the purine/pyrimidine phosphoribosyltransferase family. PyrE subfamily. In terms of assembly, homodimer. The cofactor is Mg(2+).

The enzyme catalyses orotidine 5'-phosphate + diphosphate = orotate + 5-phospho-alpha-D-ribose 1-diphosphate. It participates in pyrimidine metabolism; UMP biosynthesis via de novo pathway; UMP from orotate: step 1/2. Its function is as follows. Catalyzes the transfer of a ribosyl phosphate group from 5-phosphoribose 1-diphosphate to orotate, leading to the formation of orotidine monophosphate (OMP). The sequence is that of Orotate phosphoribosyltransferase from Serratia proteamaculans (strain 568).